A 175-amino-acid chain; its full sequence is ATP synthase subunit b, chloroplastic (175 aa).

The chain crosses the membrane as a helical span at residues 21–40 (LLESNVINIIILISLLIYLG).

It belongs to the ATPase B chain family. As to quaternary structure, F-type ATPases have 2 components, F(1) - the catalytic core - and F(0) - the membrane proton channel. F(1) has five subunits: alpha(3), beta(3), gamma(1), delta(1), epsilon(1). F(0) has four main subunits: a(1), b(1), b'(1) and c(10-14). The alpha and beta chains form an alternating ring which encloses part of the gamma chain. F(1) is attached to F(0) by a central stalk formed by the gamma and epsilon chains, while a peripheral stalk is formed by the delta, b and b' chains.

The protein localises to the plastid. Its subcellular location is the chloroplast thylakoid membrane. In terms of biological role, f(1)F(0) ATP synthase produces ATP from ADP in the presence of a proton or sodium gradient. F-type ATPases consist of two structural domains, F(1) containing the extramembraneous catalytic core and F(0) containing the membrane proton channel, linked together by a central stalk and a peripheral stalk. During catalysis, ATP synthesis in the catalytic domain of F(1) is coupled via a rotary mechanism of the central stalk subunits to proton translocation. Component of the F(0) channel, it forms part of the peripheral stalk, linking F(1) to F(0). The protein is ATP synthase subunit b, chloroplastic of Cyanidium caldarium (Red alga).